The chain runs to 81 residues: ATP synthase subunit c, chloroplastic (81 aa).

2 consecutive transmembrane segments (helical) span residues 3–23 (PLISAASVIAAGLAVGLASIG) and 57–77 (LAFMEALTIYGLVVALALLFA).

This sequence belongs to the ATPase C chain family. As to quaternary structure, F-type ATPases have 2 components, F(1) - the catalytic core - and F(0) - the membrane proton channel. F(1) has five subunits: alpha(3), beta(3), gamma(1), delta(1), epsilon(1). F(0) has four main subunits: a(1), b(1), b'(1) and c(10-14). The alpha and beta chains form an alternating ring which encloses part of the gamma chain. F(1) is attached to F(0) by a central stalk formed by the gamma and epsilon chains, while a peripheral stalk is formed by the delta, b and b' chains.

It is found in the plastid. The protein resides in the chloroplast thylakoid membrane. Functionally, f(1)F(0) ATP synthase produces ATP from ADP in the presence of a proton or sodium gradient. F-type ATPases consist of two structural domains, F(1) containing the extramembraneous catalytic core and F(0) containing the membrane proton channel, linked together by a central stalk and a peripheral stalk. During catalysis, ATP synthesis in the catalytic domain of F(1) is coupled via a rotary mechanism of the central stalk subunits to proton translocation. Key component of the F(0) channel; it plays a direct role in translocation across the membrane. A homomeric c-ring of between 10-14 subunits forms the central stalk rotor element with the F(1) delta and epsilon subunits. The chain is ATP synthase subunit c, chloroplastic from Ipomoea purpurea (Common morning glory).